We begin with the raw amino-acid sequence, 585 residues long: Tyramine beta-hydroxylase (585 aa).

The N-terminal stretch at 1-21 (MKCANAAALLFFVLCDIGVHG) is a signal peptide. The 112-residue stretch at 31–142 (SNVTVKWQTD…GTTQFYIAAS (112 aa)) folds into the DOMON domain. N-linked (GlcNAc...) asparagine glycosylation is found at asparagine 32 and asparagine 71. The active site involves tyrosine 206. 2 cysteine pairs are disulfide-bonded: cysteine 208-cysteine 258 and cysteine 247-cysteine 270. Histidine 240 and histidine 241 together coordinate Cu(2+). The Cu(2+) site is built by histidine 308, histidine 386, and histidine 388. Disulfide bonds link cysteine 365-cysteine 477, cysteine 369-cysteine 534, and cysteine 440-cysteine 462. The active site involves histidine 386. Asparagine 449 carries an N-linked (GlcNAc...) asparagine glycan. Methionine 461 provides a ligand contact to Cu(2+). Asparagine 483 carries an N-linked (GlcNAc...) asparagine glycan.

It belongs to the copper type II ascorbate-dependent monooxygenase family. Cu(2+) serves as cofactor.

The protein resides in the cytoplasmic vesicle. The protein localises to the secretory vesicle. Its subcellular location is the synaptic vesicle. The enzyme catalyses tyramine + L-ascorbate + O2 = (R)-octopamine + L-dehydroascorbate + H2O. In terms of biological role, catalyzes the hydroxylation of tyramine into octopamine, a neurotransmitter involved in pharyngeal pumping and egg laying. The chain is Tyramine beta-hydroxylase (tbh-1) from Caenorhabditis briggsae.